Consider the following 378-residue polypeptide: Putative glutamate--cysteine ligase 2 (378 aa).

This sequence belongs to the glutamate--cysteine ligase type 2 family. YbdK subfamily.

The enzyme catalyses L-cysteine + L-glutamate + ATP = gamma-L-glutamyl-L-cysteine + ADP + phosphate + H(+). ATP-dependent carboxylate-amine ligase which exhibits weak glutamate--cysteine ligase activity. The chain is Putative glutamate--cysteine ligase 2 from Leifsonia xyli subsp. xyli (strain CTCB07).